The sequence spans 965 residues: MNTLSQAIKAYNSNDYELALKLFEKSAETYGRKIVEFQIIKCKEKLSTNSYVSEDKKNSVCDSSLDIATQLLLSNVKKLTLSESEKNSLKNKWKSITGKKSENAEIRKVELVPKDFPKDLVLAPLPDHVNDFTWYKNRKKSLGIKPVNKNIGLSIIIPTFNRSRILDITLACLVNQKTNYPFEVVVADDGSKENLLTIVQKYEQKLDIKYVRQKDYGYQLCAVRNLGLRTAKYDFVSILDCDMAPQQLWVHSYLTELLEDNDIVLIGPRKYVDTHNITAEQFLNDPYLIESLPETATNNNPSITSKGNISLDWRLEHFKKTDNLRLCDSPFRYFSCGNVAFSKEWLNKVGWFDEEFNHWGGEDVEFGYRLFAKGCFFRVIDGGMAYHQEPPGKENETDREAGKSITLKIVKEKVPYIYRKLLPIEDSHIHRIPLVSIYIPAYNCANYIQRCVDSALNQTVVDLEVCICNDGSTDNTLEVINKLYGNNPRVRIMSKPNGGIASASNAAVSFAKGYYIGQLDSDDYLEPDAVELCLKEFLKDKTLACVYTTNRNVNPDGSLIANGYNWPEFSREKLTTAMIAHHFRMFTIRAWHLTDGFNEKIENAVDYDMFLKLSEVGKFKHLNKICYNRVLHGDNTSIKNLDTQKKNHFVVVNQSLNRQRVSNYNYDEFDNLDESRKYIFNKTADYQEEIDILKDIKIVQRKDAKVAISIFYPNRLDGLVKKLNNIIEYNKNVLIIVLHIDKNHLTSDIKKEILEFHNKNQINILLNNDVSYYTNNRLIKTKAHLSNMNKLRQLNLNLEYIIFDNHDSLFIKNDSYNHIKKYDIGMNFSSLTNDWINKINAHSPFKNLIKKYFNDNDLKTINMKGASQGMFIKYTLAHDIATIMKEVITLCQSTDSVPEYNTEDIWFQFALLILEKKTGHVFNKTSTLTYMPWERKLQWTNEQIESAKRGENIPVNKFIINSITL.

Residues F132–Y418 are galactosaminyltransferase; A1 domain. UDP-N-acetyl-alpha-D-galactosamine-binding positions include P158, R162, D189, Y218, R224, and D240–C241. D242 serves as a coordination point for Mn(2+). E362–D363 contacts UDP-N-acetyl-alpha-D-galactosamine. Mn(2+) is bound at residue H387. The segment at R419–T683 is glucuronosyltransferase; A2 domain. UDP-alpha-D-glucuronate contacts are provided by residues Y442, D470, and Q518–S521. D522 contacts Mn(2+). UDP-alpha-D-glucuronate-binding positions include H582 and A604–V605. H632 serves as a coordination point for Mn(2+).

The protein belongs to the glycosyltransferase 2 family. CS/HAS subfamily. Requires Mn(2+) as cofactor.

It is found in the cell membrane. The enzyme catalyses 3-O-(beta-D-GlcA-(1-&gt;3)-beta-D-GalNAc-(1-&gt;4)-beta-D-GlcA-(1-&gt;3)-beta-D-Gal-(1-&gt;3)-beta-D-Gal-(1-&gt;4)-beta-D-Xyl)-L-seryl-[protein] + UDP-N-acetyl-alpha-D-galactosamine = 3-O-(beta-D-GalNAc-(1-&gt;4)-beta-D-GlcA-(1-&gt;3)-beta-D-GalNAc-(1-&gt;4)-beta-D-GlcA-(1-&gt;3)-beta-D-Gal-(1-&gt;3)-beta-D-Gal-(1-&gt;4)-beta-D-Xyl)-L-seryl-[protein] + UDP + H(+). It catalyses the reaction 3-O-{beta-D-GlcA-(1-&gt;3)-[beta-D-GalNAc-(1-&gt;4)-beta-D-GlcA-(1-&gt;3)](n)-beta-D-GalNAc-(1-&gt;4)-beta-D-GlcA-(1-&gt;3)-beta-D-Gal-(1-&gt;3)-beta-D-Gal-(1-&gt;4)-beta-D-Xyl}-L-seryl-[protein] + UDP-N-acetyl-alpha-D-galactosamine = 3-O-{[beta-D-GalNAc-(1-&gt;4)-beta-D-GlcA-(1-&gt;3)](n+1)-beta-D-GalNAc-(1-&gt;4)-beta-D-GlcA-(1-&gt;3)-beta-D-Gal-(1-&gt;3)-beta-D-Gal-(1-&gt;4)-beta-D-Xyl}-L-seryl-[protein] + UDP + H(+). It carries out the reaction 3-O-(beta-D-GalNAc-(1-&gt;4)-beta-D-GlcA-(1-&gt;3)-beta-D-Gal-(1-&gt;3)-beta-D-Gal-(1-&gt;4)-beta-D-Xyl)-L-seryl-[protein] + UDP-alpha-D-glucuronate = 3-O-(beta-D-GlcA-(1-&gt;3)-beta-D-GalNAc-(1-&gt;4)-beta-D-GlcA-(1-&gt;3)-beta-D-Gal-(1-&gt;3)-beta-D-Gal-(1-&gt;4)-beta-D-Xyl)-L-seryl-[protein] + UDP + H(+). The catalysed reaction is 3-O-{[beta-D-GalNAc-(1-&gt;4)-beta-D-GlcA-(1-&gt;3)](n)-beta-D-GalNAc-(1-&gt;4)-beta-D-GlcA-(1-&gt;3)-beta-D-Gal-(1-&gt;3)-beta-D-Gal-(1-&gt;4)-beta-D-Xyl}-L-seryl-[protein] + UDP-alpha-D-glucuronate = 3-O-{beta-D-GlcA-(1-&gt;3)-[beta-D-GalNAc-(1-&gt;4)-beta-D-GlcA-(1-&gt;3)](n)-beta-D-GalNAc-(1-&gt;4)-beta-D-GlcA-(1-&gt;3)-beta-D-Gal-(1-&gt;3)-beta-D-Gal-(1-&gt;4)-beta-D-Xyl}-L-seryl-[protein] + UDP + H(+). Glycosyltransferase that catalyzes elongation of chondroitin, a polysaccharide composed of a repeating disaccharide of N-acetylgalactosamine (GalNAc) and glucuronic acid (GlcUA) units, by alternatively transferring the GlcUA and GalNAc moiety from UDP-GlcUA and UDP-GalNAc to the non-reducing ends of the chondroitin chain. Each chondroitin unit has the composition beta-(1-&gt;4)-GlcUA-beta-(1-&gt;3)-GalNAc. In Pasteurella multocida (strain Pm70), this protein is Chondroitin synthase (fcbD).